A 64-amino-acid polypeptide reads, in one-letter code: Large ribosomal subunit protein bL35 (64 aa).

The protein belongs to the bacterial ribosomal protein bL35 family.

This chain is Large ribosomal subunit protein bL35, found in Lactiplantibacillus plantarum (strain ATCC BAA-793 / NCIMB 8826 / WCFS1) (Lactobacillus plantarum).